A 402-amino-acid chain; its full sequence is DNA replication and repair protein RecF (402 aa).

30-37 contacts ATP; the sequence is GYNGIGKT.

The protein belongs to the RecF family.

The protein resides in the cytoplasm. Its function is as follows. The RecF protein is involved in DNA metabolism; it is required for DNA replication and normal SOS inducibility. RecF binds preferentially to single-stranded, linear DNA. It also seems to bind ATP. The protein is DNA replication and repair protein RecF of Pseudarthrobacter chlorophenolicus (strain ATCC 700700 / DSM 12829 / CIP 107037 / JCM 12360 / KCTC 9906 / NCIMB 13794 / A6) (Arthrobacter chlorophenolicus).